A 388-amino-acid chain; its full sequence is Glutamate 5-kinase (388 aa).

Position 21 (Lys21) interacts with ATP. Positions 61, 148, and 160 each coordinate substrate. Residues 180 to 181 and 222 to 228 each bind ATP; these read TD and TGGMITK. One can recognise a PUA domain in the interval 285-363; sequence RGSVFLDPGA…RWLARELGAE (79 aa).

It belongs to the glutamate 5-kinase family.

It is found in the cytoplasm. It carries out the reaction L-glutamate + ATP = L-glutamyl 5-phosphate + ADP. It functions in the pathway amino-acid biosynthesis; L-proline biosynthesis; L-glutamate 5-semialdehyde from L-glutamate: step 1/2. In terms of biological role, catalyzes the transfer of a phosphate group to glutamate to form L-glutamate 5-phosphate. This is Glutamate 5-kinase from Thermobifida fusca (strain YX).